We begin with the raw amino-acid sequence, 95 residues long: MLHTLMKSPFETNISFFSGMLKKTDDFLALQDGVLIALIDNIFLKKITFSSENLYVIKEDVYARGIHKNISSSFILISYIDFVNLTLKNKKQIIW.

This sequence belongs to the DsrH/TusB family. In terms of assembly, heterohexamer, formed by a dimer of trimers. The hexameric TusBCD complex contains 2 copies each of TusB, TusC and TusD. The TusBCD complex interacts with TusE.

It localises to the cytoplasm. In terms of biological role, part of a sulfur-relay system required for 2-thiolation of 5-methylaminomethyl-2-thiouridine (mnm(5)s(2)U) at tRNA wobble positions. This Buchnera aphidicola subsp. Schizaphis graminum (strain Sg) protein is Protein TusB.